The chain runs to 571 residues: Kelch-like protein 28 (571 aa).

A BTB domain is found at 35–102; that stretch reads CDIILRVGDV…AYTGTVFISQ (68 aa). Kelch repeat units follow at residues 284 to 331, 332 to 386, 387 to 433, 435 to 479, 480 to 526, and 528 to 570; these read VLCA…VLDQ, KVFV…VLAG, EVFA…VLDG, LYAI…VMLG, FIFV…VIDN, and LYVV…GLTA.

The chain is Kelch-like protein 28 (Klhl28) from Mus musculus (Mouse).